A 108-amino-acid polypeptide reads, in one-letter code: UPF0166 protein MJ1524 (108 aa).

Belongs to the UPF0166 family.

The chain is UPF0166 protein MJ1524 from Methanocaldococcus jannaschii (strain ATCC 43067 / DSM 2661 / JAL-1 / JCM 10045 / NBRC 100440) (Methanococcus jannaschii).